Here is a 2325-residue protein sequence, read N- to C-terminus: Centriolin (2325 aa).

The disordered stretch occupies residues 1 to 33 (MKKGSQQKIFSKAKIPSSSHSPIPSSMSNMRSR). Residues 16-33 (PSSSHSPIPSSMSNMRSR) are compositionally biased toward low complexity. 4 LRR repeats span residues 126–147 (KLEVLNLSYNLIGKIEKLDKLL), 148–169 (KLRELNLSYNKISKIEGIENMC), 170–191 (NLQKLNLAGNEIEHIPVWLGKK), and 194–215 (SLRVLNLKGNKISSLQDISKLK). Residues 228 to 266 (NPVVTLPHYLQFTIFHLRSLESLEGQPVTTQDRQEAFER) enclose the LRRCT domain. Coiled-coil stretches lie at residues 267 to 343 (FSLE…IELT) and 435 to 799 (LDTQ…LNHV). S831 bears the Phosphoserine mark. The stretch at 851 to 1101 (LARSKWERDE…ARLQNVLDLT (251 aa)) forms a coiled coil. The tract at residues 1150 to 1241 (PSSKVSSHSS…DQEEPPFVPP (92 aa)) is disordered. Acidic residues predominate over residues 1224 to 1235 (SQEESELDDQEE). Positions 1317–2255 (EHHNLENEVS…DRLKAQLRHC (939 aa)) form a coiled coil. A Phosphoserine modification is found at S1475. A required for centrosome localization region spans residues 1948-2118 (MMFQRLQKER…ELVAQDNHER (171 aa)). The interval 1985 to 2325 (QKSKLDQVLS…QNQEKNASAR (341 aa)) is sufficient for interaction with HOOK2. Residues 2288–2325 (VTSTSADSASSPSLSQLESSLTEDSQLGQNQEKNASAR) are disordered. Low complexity predominate over residues 2290–2314 (STSADSASSPSLSQLESSLTEDSQL). A compositionally biased stretch (polar residues) spans 2315-2325 (GQNQEKNASAR).

In terms of assembly, interacts with HOOK2. Interacts with EXOC6 and SNAPIN. Associates with the exocyst complex. As to expression, widely expressed with highest levels in testis and trachea.

Its subcellular location is the cytoplasm. The protein localises to the cytoskeleton. It is found in the microtubule organizing center. It localises to the centrosome. The protein resides in the midbody. Its subcellular location is the midbody ring. Functionally, involved in cell cycle progression and cytokinesis. During the late steps of cytokinesis, anchors exocyst and SNARE complexes at the midbody, thereby allowing secretory vesicle-mediated abscission. In Homo sapiens (Human), this protein is Centriolin (CNTRL).